A 167-amino-acid polypeptide reads, in one-letter code: Small ribosomal subunit protein uS5 (167 aa).

The region spanning 11–74 is the S5 DRBM domain; that stretch reads LQEKLIAVNR…EKARRAMINV (64 aa).

This sequence belongs to the universal ribosomal protein uS5 family. In terms of assembly, part of the 30S ribosomal subunit. Contacts proteins S4 and S8.

In terms of biological role, with S4 and S12 plays an important role in translational accuracy. Functionally, located at the back of the 30S subunit body where it stabilizes the conformation of the head with respect to the body. The polypeptide is Small ribosomal subunit protein uS5 (Yersinia pseudotuberculosis serotype O:1b (strain IP 31758)).